A 190-amino-acid chain; its full sequence is ATP synthase subunit C lysine N-methyltransferase (190 aa).

The protein belongs to the ANT/ATPSC lysine N-methyltransferase family.

It localises to the mitochondrion. It carries out the reaction L-lysyl-[protein] + 3 S-adenosyl-L-methionine = N(6),N(6),N(6)-trimethyl-L-lysyl-[protein] + 3 S-adenosyl-L-homocysteine + 3 H(+). In terms of biological role, mitochondrial protein-lysine N-methyltransferase that trimethylates ATP synthase subunit C. Trimethylation is required for proper incorporation of the C subunit into the ATP synthase complex and mitochondrial respiration. This is ATP synthase subunit C lysine N-methyltransferase from Caenorhabditis elegans.